Reading from the N-terminus, the 177-residue chain is Protein C (177 aa).

A compositionally biased stretch (polar residues) spans 1–10; sequence MSTKAWNASR. Residues 1–38 are disordered; that stretch reads MSTKAWNASRLSGPDPSTPWSLRKPLQHGSRPPKGKRL.

It belongs to the morbillivirus protein C family.

In Rinderpest virus (strain RBOK) (RDV), this protein is Protein C (P/V/C).